We begin with the raw amino-acid sequence, 472 residues long: Violaxanthin de-epoxidase, chloroplastic (472 aa).

6 disulfides stabilise this stretch: C133-C151, C138-C145, C157-C174, C161-C170, C189-C196, and C242-C372. A coiled-coil region spans residues 379–462; it reads VERLEKTVEE…MEAGEVEKLF (84 aa).

Belongs to the calycin superfamily. Lipocalin family. Post-translationally, disulfide bonds. Reduction of the disulfides results in loss of a rigid structure, a decrease in thermal stability of 15 degrees Celsius and a loss of activity.

The protein localises to the plastid. Its subcellular location is the chloroplast thylakoid membrane. The enzyme catalyses all-trans-violaxanthin + 2 L-ascorbate = all-trans-zeaxanthin + 2 L-dehydroascorbate + 2 H2O. Irreversibly inhibited by DTT and iodoacetamide at pH 5.7 or pH 5.2, but not at pH 7.2. Regulated through Ca(2+) gating of H(+) flux at the CFoH(+) channel. Requires the presence of lipids forming reverse hexagonal structures such as monogalactosyldiacylglyceride (MGDG) or phosphatidylethanolamine. A negative curvature elastic stress in the thylakoid lipid bilayer is required for VDE1 activity. Functionally, part of the xanthophyll (or violaxanthin) cycle for controlling the concentration of zeaxanthin in chloroplasts. Catalyzes the two-step mono de-epoxidation reaction. Stereospecific for all-trans xanthophylls. Zeaxanthin induces the dissipation of excitation energy in the chlorophyll of the light-harvesting protein complex of photosystem II. The protein is Violaxanthin de-epoxidase, chloroplastic of Spinacia oleracea (Spinach).